Consider the following 239-residue polypeptide: 1-(5-phosphoribosyl)-5-[(5-phosphoribosylamino)methylideneamino] imidazole-4-carboxamide isomerase (239 aa).

Catalysis depends on D8, which acts as the Proton acceptor. Catalysis depends on D129, which acts as the Proton donor.

The protein belongs to the HisA/HisF family.

The protein localises to the cytoplasm. It carries out the reaction 1-(5-phospho-beta-D-ribosyl)-5-[(5-phospho-beta-D-ribosylamino)methylideneamino]imidazole-4-carboxamide = 5-[(5-phospho-1-deoxy-D-ribulos-1-ylimino)methylamino]-1-(5-phospho-beta-D-ribosyl)imidazole-4-carboxamide. Its pathway is amino-acid biosynthesis; L-histidine biosynthesis; L-histidine from 5-phospho-alpha-D-ribose 1-diphosphate: step 4/9. This is 1-(5-phosphoribosyl)-5-[(5-phosphoribosylamino)methylideneamino] imidazole-4-carboxamide isomerase from Bacillus anthracis (strain A0248).